Here is a 174-residue protein sequence, read N- to C-terminus: UPF0200 protein PAE1629 (174 aa).

ATP is bound at residue 9–16 (GLPGSGKT).

Belongs to the UPF0200 family.

The protein is UPF0200 protein PAE1629 of Pyrobaculum aerophilum (strain ATCC 51768 / DSM 7523 / JCM 9630 / CIP 104966 / NBRC 100827 / IM2).